We begin with the raw amino-acid sequence, 440 residues long: ATP-dependent RNA helicase sub2 (440 aa).

Over residues 1–16 the composition is skewed to acidic residues; it reads MSHEEDLIDYSDEELQ. The segment at 1 to 42 is disordered; sequence MSHEEDLIDYSDEELQTTDAAATTAAPASNGEAKKGDLTVSG. Positions 17–28 are enriched in low complexity; the sequence is TTDAAATTAAPA. The Q motif signature appears at 57-85; sequence TGFRDFLLKEELLRAITDCGFEHPSEVQQ. Positions 88–263 constitute a Helicase ATP-binding domain; the sequence is IPTAILNVDV…KKFMRNPLEV (176 aa). 101–108 provides a ligand contact to ATP; the sequence is AKSGLGKT. The short motif at 210 to 213 is the DEAD box element; it reads DECD. The 146-residue stretch at 291–436 folds into the Helicase C-terminal domain; the sequence is KLNELLDSLE…EYPEGGVDSS (146 aa).

The protein belongs to the DEAD box helicase family. DECD subfamily.

It localises to the nucleus. It catalyses the reaction ATP + H2O = ADP + phosphate + H(+). In terms of biological role, ATP-binding RNA helicase involved in transcription elongation and required for the export of mRNA out of the nucleus. SUB2 also plays a role in pre-mRNA splicing and spliceosome assembly. May be involved in rDNA and telomeric silencing, and maintenance of genome integrity. The sequence is that of ATP-dependent RNA helicase sub2 (sub2) from Aspergillus niger (strain ATCC MYA-4892 / CBS 513.88 / FGSC A1513).